The chain runs to 451 residues: Tryptophan biosynthesis protein TrpCF (451 aa).

The tract at residues 1–256 (MQETILNKII…TNIKSLIIGD (256 aa)) is indole-3-glycerol phosphate synthase. An N-(5'-phosphoribosyl)anthranilate isomerase region spans residues 257-451 (NKVCGLTRII…ISLIFKKLTF (195 aa)).

It in the N-terminal section; belongs to the TrpC family. This sequence in the C-terminal section; belongs to the TrpF family. As to quaternary structure, monomer.

The enzyme catalyses N-(5-phospho-beta-D-ribosyl)anthranilate = 1-(2-carboxyphenylamino)-1-deoxy-D-ribulose 5-phosphate. It catalyses the reaction 1-(2-carboxyphenylamino)-1-deoxy-D-ribulose 5-phosphate + H(+) = (1S,2R)-1-C-(indol-3-yl)glycerol 3-phosphate + CO2 + H2O. The protein operates within amino-acid biosynthesis; L-tryptophan biosynthesis; L-tryptophan from chorismate: step 3/5. It participates in amino-acid biosynthesis; L-tryptophan biosynthesis; L-tryptophan from chorismate: step 4/5. Its function is as follows. Bifunctional enzyme that catalyzes two sequential steps of tryptophan biosynthetic pathway. The first reaction is catalyzed by the isomerase, coded by the TrpF domain; the second reaction is catalyzed by the synthase, coded by the TrpC domain. In Buchnera aphidicola subsp. Schizaphis graminum (strain Sg), this protein is Tryptophan biosynthesis protein TrpCF (trpC).